We begin with the raw amino-acid sequence, 162 residues long: Caveolin-2 (162 aa).

Over 1-86 (MGLETEKADV…FEISKYVMYK (86 aa)) the chain is Cytoplasmic. A Phosphotyrosine modification is found at Y19. 2 positions are modified to phosphoserine: S20 and S36. Positions 87–107 (FLTVFLAIPLAFVAGILFATL) form an intramembrane region, helical. At 108 to 162 (SCLHIWIIMPFVKTCLMVLPSVQTIWKSVTDVIIAPLCTSVGRSFSSISLQLSHD) the chain is on the cytoplasmic side.

Belongs to the caveolin family. As to quaternary structure, homodimer. Caveolin-1 and -2 colocalize and form a stable hetero-oligomeric complex.

The protein resides in the golgi apparatus membrane. The protein localises to the cell membrane. It localises to the membrane. Its subcellular location is the caveola. Functionally, may act as a scaffolding protein within caveolar membranes. Interacts directly with G-protein alpha subunits and can functionally regulate their activity. Caveolin-2 may function as an accessory protein in conjunction with caveolin-1. In Microcebus murinus (Gray mouse lemur), this protein is Caveolin-2 (CAV2).